We begin with the raw amino-acid sequence, 353 residues long: MTKITNDLFLKAARKEQVDRIPVWYMRQAGRSQPEYRKLKEKYSLFEITHQPEICAYVTKLPVDQYGVDAAILYKDIMTPLPGMGVDVEIKSGIGPVIHNPIRSFQDVEKLTMFKPEIEVPYVLDTIKLLADDMLDVPLIGFAGAPFTLASYMIEGGPSKNYHQTKSFMYREPEVWAILMEKLGRMTANYLIAQINAGTSAVQLFDSWVGALSRADYAEYIRPVIEMIVREVKAVHPTTPIIMQAVGASHLLAEWETMPLDVVGVDWRETITSARKKVPTKAIQGNLDPSTLLAPEKCLKEANRILQEGVLEPGYIFNLGHGVFPEVPPEMLKKLTNYIHERSEILLKKDDIK.

Substrate is bound by residues 27–31, F46, D76, Y152, S207, and H321; that span reads RQAGR.

It belongs to the uroporphyrinogen decarboxylase family. As to quaternary structure, homodimer.

It localises to the cytoplasm. It carries out the reaction uroporphyrinogen III + 4 H(+) = coproporphyrinogen III + 4 CO2. The protein operates within porphyrin-containing compound metabolism; protoporphyrin-IX biosynthesis; coproporphyrinogen-III from 5-aminolevulinate: step 4/4. Catalyzes the decarboxylation of four acetate groups of uroporphyrinogen-III to yield coproporphyrinogen-III. The chain is Uroporphyrinogen decarboxylase from Listeria monocytogenes serotype 4b (strain CLIP80459).